The sequence spans 473 residues: Protein nucleotidyltransferase YdiU (473 aa).

ATP-binding residues include Gly79, Gly81, Arg82, Lys102, Asp114, Gly115, Arg165, and Arg172. Residue Asp241 is the Proton acceptor of the active site. Mg(2+) contacts are provided by Asn242 and Asp251. Asp251 lines the ATP pocket.

The protein belongs to the SELO family. The cofactor is Mg(2+). Requires Mn(2+) as cofactor.

It catalyses the reaction L-seryl-[protein] + ATP = 3-O-(5'-adenylyl)-L-seryl-[protein] + diphosphate. The enzyme catalyses L-threonyl-[protein] + ATP = 3-O-(5'-adenylyl)-L-threonyl-[protein] + diphosphate. The catalysed reaction is L-tyrosyl-[protein] + ATP = O-(5'-adenylyl)-L-tyrosyl-[protein] + diphosphate. It carries out the reaction L-histidyl-[protein] + UTP = N(tele)-(5'-uridylyl)-L-histidyl-[protein] + diphosphate. It catalyses the reaction L-seryl-[protein] + UTP = O-(5'-uridylyl)-L-seryl-[protein] + diphosphate. The enzyme catalyses L-tyrosyl-[protein] + UTP = O-(5'-uridylyl)-L-tyrosyl-[protein] + diphosphate. Functionally, nucleotidyltransferase involved in the post-translational modification of proteins. It can catalyze the addition of adenosine monophosphate (AMP) or uridine monophosphate (UMP) to a protein, resulting in modifications known as AMPylation and UMPylation. The sequence is that of Protein nucleotidyltransferase YdiU from Marinomonas sp. (strain MWYL1).